The chain runs to 309 residues: UDP-N-acetylenolpyruvoylglucosamine reductase (309 aa).

Residues 40–204 form the FAD-binding PCMH-type domain; that stretch reads LGGKVPLFAI…LQATFKLKKG (165 aa). Residue Arg-182 is part of the active site. Ser-233 serves as the catalytic Proton donor. Glu-304 is an active-site residue.

This sequence belongs to the MurB family. It depends on FAD as a cofactor.

It is found in the cytoplasm. The enzyme catalyses UDP-N-acetyl-alpha-D-muramate + NADP(+) = UDP-N-acetyl-3-O-(1-carboxyvinyl)-alpha-D-glucosamine + NADPH + H(+). It participates in cell wall biogenesis; peptidoglycan biosynthesis. Functionally, cell wall formation. The polypeptide is UDP-N-acetylenolpyruvoylglucosamine reductase (Fervidobacterium nodosum (strain ATCC 35602 / DSM 5306 / Rt17-B1)).